Consider the following 398-residue polypeptide: Formate-dependent phosphoribosylglycinamide formyltransferase (398 aa).

N(1)-(5-phospho-beta-D-ribosyl)glycinamide-binding positions include 21-22 and Glu81; that span reads EL. ATP-binding positions include Arg113, Lys154, 194 to 197, and Glu202; that span reads EEYV. Residues 118 to 314 form the ATP-grasp domain; the sequence is RFAAEKVKVP…EFQVHVRSAL (197 aa). Residues Glu273 and Glu285 each coordinate Mg(2+). N(1)-(5-phospho-beta-D-ribosyl)glycinamide contacts are provided by residues Asp292, Lys362, and 369–370; that span reads RR.

The protein belongs to the PurK/PurT family. Homodimer.

The enzyme catalyses N(1)-(5-phospho-beta-D-ribosyl)glycinamide + formate + ATP = N(2)-formyl-N(1)-(5-phospho-beta-D-ribosyl)glycinamide + ADP + phosphate + H(+). Its pathway is purine metabolism; IMP biosynthesis via de novo pathway; N(2)-formyl-N(1)-(5-phospho-D-ribosyl)glycinamide from N(1)-(5-phospho-D-ribosyl)glycinamide (formate route): step 1/1. In terms of biological role, involved in the de novo purine biosynthesis. Catalyzes the transfer of formate to 5-phospho-ribosyl-glycinamide (GAR), producing 5-phospho-ribosyl-N-formylglycinamide (FGAR). Formate is provided by PurU via hydrolysis of 10-formyl-tetrahydrofolate. This Sulfolobus acidocaldarius (strain ATCC 33909 / DSM 639 / JCM 8929 / NBRC 15157 / NCIMB 11770) protein is Formate-dependent phosphoribosylglycinamide formyltransferase.